The following is a 155-amino-acid chain: NADPH-dependent 7-cyano-7-deazaguanine reductase (155 aa).

Positions M1–A20 are enriched in polar residues. Residues M1–A26 form a disordered region. The active-site Thioimide intermediate is the C53. The active-site Proton donor is D60. Residues V75–S77 and H94–E95 contribute to the substrate site.

It belongs to the GTP cyclohydrolase I family. QueF type 1 subfamily.

Its subcellular location is the cytoplasm. It catalyses the reaction 7-aminomethyl-7-carbaguanine + 2 NADP(+) = 7-cyano-7-deazaguanine + 2 NADPH + 3 H(+). Its pathway is tRNA modification; tRNA-queuosine biosynthesis. Functionally, catalyzes the NADPH-dependent reduction of 7-cyano-7-deazaguanine (preQ0) to 7-aminomethyl-7-deazaguanine (preQ1). In Rhizobium etli (strain CIAT 652), this protein is NADPH-dependent 7-cyano-7-deazaguanine reductase.